Here is a 432-residue protein sequence, read N- to C-terminus: UDP-N-acetylglucosamine 1-carboxyvinyltransferase (432 aa).

Phosphoenolpyruvate is bound at residue 22-23 (KN). Residue arginine 102 participates in UDP-N-acetyl-alpha-D-glucosamine binding. The active-site Proton donor is the cysteine 126. At cysteine 126 the chain carries 2-(S-cysteinyl)pyruvic acid O-phosphothioketal. UDP-N-acetyl-alpha-D-glucosamine is bound by residues 131–135 (RPVDL), aspartate 317, and isoleucine 339.

The protein belongs to the EPSP synthase family. MurA subfamily.

Its subcellular location is the cytoplasm. It carries out the reaction phosphoenolpyruvate + UDP-N-acetyl-alpha-D-glucosamine = UDP-N-acetyl-3-O-(1-carboxyvinyl)-alpha-D-glucosamine + phosphate. Its pathway is cell wall biogenesis; peptidoglycan biosynthesis. In terms of biological role, cell wall formation. Adds enolpyruvyl to UDP-N-acetylglucosamine. The protein is UDP-N-acetylglucosamine 1-carboxyvinyltransferase of Rhodospirillum centenum (strain ATCC 51521 / SW).